The primary structure comprises 690 residues: Elongation factor G (690 aa).

The 276-residue stretch at 8–283 (EDYRNFGIMA…AVVDYLPSPV (276 aa)) folds into the tr-type G domain. GTP is bound by residues 17–24 (AHIDAGKT), 81–85 (DTPGH), and 135–138 (NKMD).

It belongs to the TRAFAC class translation factor GTPase superfamily. Classic translation factor GTPase family. EF-G/EF-2 subfamily.

Its subcellular location is the cytoplasm. Its function is as follows. Catalyzes the GTP-dependent ribosomal translocation step during translation elongation. During this step, the ribosome changes from the pre-translocational (PRE) to the post-translocational (POST) state as the newly formed A-site-bound peptidyl-tRNA and P-site-bound deacylated tRNA move to the P and E sites, respectively. Catalyzes the coordinated movement of the two tRNA molecules, the mRNA and conformational changes in the ribosome. The polypeptide is Elongation factor G (Rhodopseudomonas palustris (strain BisB5)).